Reading from the N-terminus, the 282-residue chain is tRNA uridine(34) hydroxylase (282 aa).

The Rhodanese domain maps to 128-222 (EGRPVVMLDT…YFEEVGGSHY (95 aa)). Cys-182 functions as the Cysteine persulfide intermediate in the catalytic mechanism.

This sequence belongs to the TrhO family.

The catalysed reaction is uridine(34) in tRNA + AH2 + O2 = 5-hydroxyuridine(34) in tRNA + A + H2O. Functionally, catalyzes oxygen-dependent 5-hydroxyuridine (ho5U) modification at position 34 in tRNAs. In Cupriavidus taiwanensis (strain DSM 17343 / BCRC 17206 / CCUG 44338 / CIP 107171 / LMG 19424 / R1) (Ralstonia taiwanensis (strain LMG 19424)), this protein is tRNA uridine(34) hydroxylase.